The following is a 256-amino-acid chain: Transmembrane protein 74B (256 aa).

The disordered stretch occupies residues 1 to 111 (MPPAQGYEFA…LSLHSEEGPA (111 aa)). Over residues 80–96 (RLGSSPSPPGGVSSLPR) the composition is skewed to low complexity. The segment covering 97-108 (SQRDDLSLHSEE) has biased composition (basic and acidic residues). 2 consecutive transmembrane segments (helical) span residues 123-143 (FVSA…AYAI) and 177-197 (IIAG…LLMV).

This sequence belongs to the TMEM74 family.

It localises to the membrane. This Homo sapiens (Human) protein is Transmembrane protein 74B (TMEM74B).